Here is a 340-residue protein sequence, read N- to C-terminus: Probable HTH-type transcriptional regulator EndR (340 aa).

The region spanning 1–58 is the HTH lacI-type domain; that stretch reads MVTTMKEVAERAGVSKSTVSQFLQKRYNYMSENTKKKIEQAIEDLSYIPNEVARSLKQ. The H-T-H motif DNA-binding region spans 5–24; that stretch reads MKEVAERAGVSKSTVSQFLQ.

Its function is as follows. Putative repressor of the endoglucanase operon. The sequence is that of Probable HTH-type transcriptional regulator EndR (endR) from Paenibacillus polymyxa (Bacillus polymyxa).